The following is a 691-amino-acid chain: Threonine--tRNA ligase (691 aa).

A TGS domain is found at 1–69; that stretch reads MSTPEITPAA…QQDVEVAAVP (69 aa). The interval 268–574 is catalytic; that stretch reads DHRRLGQELD…LLEHYAGAFP (307 aa). Zn(2+) is bound by residues C373, H424, and H551.

It belongs to the class-II aminoacyl-tRNA synthetase family. Homodimer. The cofactor is Zn(2+).

The protein localises to the cytoplasm. It catalyses the reaction tRNA(Thr) + L-threonine + ATP = L-threonyl-tRNA(Thr) + AMP + diphosphate + H(+). Functionally, catalyzes the attachment of threonine to tRNA(Thr) in a two-step reaction: L-threonine is first activated by ATP to form Thr-AMP and then transferred to the acceptor end of tRNA(Thr). Also edits incorrectly charged L-seryl-tRNA(Thr). This chain is Threonine--tRNA ligase, found in Corynebacterium jeikeium (strain K411).